The chain runs to 468 residues: Interleukin-6 receptor subunit alpha (468 aa).

The signal sequence occupies residues 1–19 (MLAVGCALLAALLAAPGAA). Residues 20-365 (LAPRRCPAQE…VQDSSSVPLP (346 aa)) lie on the Extracellular side of the membrane. 4 disulfides stabilise this stretch: Cys-25–Cys-193, Cys-47–Cys-96, Cys-121–Cys-132, and Cys-165–Cys-176. One can recognise an Ig-like C2-type domain in the interval 26–112 (PAQEVARGVL…AGTVHLLVDV (87 aa)). N-linked (GlcNAc...) asparagine glycosylation is found at Asn-55 and Asn-93. Fibronectin type-III domains follow at residues 113–217 (PPEE…LQPD) and 218–316 (PPAN…TPWT). Asn-221 and Asn-245 each carry an N-linked (GlcNAc...) asparagine glycan. Positions 303-307 (WSEWS) match the WSXWS motif motif. The tract at residues 303 to 328 (WSEWSPEAMGTPWTESRSPPAENEVS) is disordered. The N-linked (GlcNAc...) asparagine glycan is linked to Asn-350. Thr-352 carries an O-linked (GlcNAc) threonine glycan. The chain crosses the membrane as a helical span at residues 366–386 (TFLVAGGSLAFGTLLCIAIVL). The Cytoplasmic segment spans residues 387 to 468 (RFKKTWKLRA…ISNTDYFFPR (82 aa)). The span at 421-433 (TPVLVPLISPPVS) shows a compositional bias: pro residues. Residues 421-468 (TPVLVPLISPPVSPSSLGSDNTSSHNRPDARDPRSPYDISNTDYFFPR) form a disordered region. Residues 446–455 (NRPDARDPRS) are compositionally biased toward basic and acidic residues. Residues 458–468 (DISNTDYFFPR) show a composition bias toward polar residues.

This sequence belongs to the type I cytokine receptor family. Type 3 subfamily. As to quaternary structure, component of a hexamer of two molecules each of IL6, IL6R and IL6ST; first binds to IL6 to associate with the signaling subunit IL6ST. Interacts (via N-terminal ectodomain) with SORL1; this interaction may affect IL6-binding to IL6R, hence decrease IL6 'classic-signaling'. In terms of assembly, also interacts with SORL1; this interaction leads to soluble IL6R internalization. May form a trimeric complex with the soluble SORL1 ectodomain and circulating IL6 receptor; this interaction might stabilize circulating IL6, hence promote IL6 'trans-signaling,. A short soluble form is released from the membrane by proteolysis. The sIL6R is formed mostly by limited proteolysis of membrane-bound receptors, a process referred to as ectodomain shedding, but is also directly secreted from the cells after alternative mRNA splicing. mIL6R is cleaved by the proteases ADAM10 and ADAM17. In terms of processing, glycosylated. Glycosylation is dispensable for transport, signaling, and cell-surface turnover. Glycosylation at Asn-55 is a protease-regulatory exosite. Glycosylation is required for ADAM17-mediated proteolysis. As to expression, expressed in peripheral blood mononuclear cells and weakly found in urine and serum. 1%-20% of the total sIL6R in plasma is generated by alternative splicing.

The protein resides in the cell membrane. It is found in the secreted. Classic and trans-signaling are both inhibited by tocilizumab, a humanized monoclonal antibody that blocks interleukin IL6R signaling. Its function is as follows. Part of the receptor for interleukin 6. Binds to IL6 with low affinity, but does not transduce a signal. Signal activation necessitate an association with IL6ST. Activation leads to the regulation of the immune response, acute-phase reactions and hematopoiesis. The interaction with membrane-bound IL6R and IL6ST stimulates 'classic signaling', the restricted expression of the IL6R limits classic IL6 signaling to only a few tissues such as the liver and some cells of the immune system. Whereas the binding of IL6 and soluble IL6R to IL6ST stimulates 'trans-signaling'. Alternatively, 'cluster signaling' occurs when membrane-bound IL6:IL6R complexes on transmitter cells activate IL6ST receptors on neighboring receiver cells. Signaling via the membrane-bound IL6R is mostly regenerative and anti-inflammatory. Drives naive CD4(+) T cells to the Th17 lineage, through 'cluster signaling' by dendritic cells. In terms of biological role, soluble form of IL6 receptor (sIL6R) that acts as an agonist of IL6 activity. The IL6:sIL6R complex (hyper-IL6) binds to IL6ST/gp130 on cell surfaces and induces signaling also on cells that do not express membrane-bound IL6R in a process called IL6 'trans-signaling'. sIL6R is causative for the pro-inflammatory properties of IL6 and an important player in the development of chronic inflammatory diseases. In complex with IL6, is required for induction of VEGF production. Plays a protective role during liver injury, being required for maintenance of tissue regeneration. 'Trans-signaling' in central nervous system regulates energy and glucose homeostasis. This is Interleukin-6 receptor subunit alpha from Homo sapiens (Human).